The chain runs to 229 residues: Cytidylate kinase (229 aa).

12–20 (GPSGAGKGT) is a binding site for ATP.

Belongs to the cytidylate kinase family. Type 1 subfamily.

It localises to the cytoplasm. It catalyses the reaction CMP + ATP = CDP + ADP. The catalysed reaction is dCMP + ATP = dCDP + ADP. The protein is Cytidylate kinase of Serratia proteamaculans (strain 568).